The chain runs to 464 residues: Trigger factor (464 aa).

Positions 166-245 (GDFLTIDITA…VKAVKERELP (80 aa)) constitute a PPIase FKBP-type domain. The disordered stretch occupies residues 426 to 464 (FVRPGGEEEAPAAEVTEADTAEGEATEVPAEDEKAEAKA). Acidic residues predominate over residues 432 to 455 (EEEAPAAEVTEADTAEGEATEVPA).

Belongs to the FKBP-type PPIase family. Tig subfamily.

The protein localises to the cytoplasm. It catalyses the reaction [protein]-peptidylproline (omega=180) = [protein]-peptidylproline (omega=0). Involved in protein export. Acts as a chaperone by maintaining the newly synthesized protein in an open conformation. Functions as a peptidyl-prolyl cis-trans isomerase. This is Trigger factor from Pseudarthrobacter chlorophenolicus (strain ATCC 700700 / DSM 12829 / CIP 107037 / JCM 12360 / KCTC 9906 / NCIMB 13794 / A6) (Arthrobacter chlorophenolicus).